The sequence spans 1161 residues: Cingulin (1161 aa).

Positions 1 to 403 (MSSLSADRKP…SLIHERFCGV (403 aa)) are head. 6 disordered regions span residues 29–53 (GGFP…SPSK), 79–309 (SYGV…LGRD), 649–678 (QSEL…KRET), 699–721 (SKAI…ESNL), 739–773 (RLHS…AASR), and 1123–1161 (QSRR…TTSC). The ZIM motif lies at 51–65 (PSKYGVAVRVQGISG). 2 stretches are compositionally biased toward polar residues: residues 84–104 (LKTQ…SPYN) and 117–129 (PQGS…QPSS). The span at 189-203 (NGIGSSLNGTGLNGS) shows a compositional bias: low complexity. Residues 273-305 (EASSTSPTINPYAPNTSATVPKLNSTKPSSTGS) show a composition bias toward polar residues. The stretch at 413–1128 (SNMKTELEQA…RKIQQSRRST (716 aa)) forms a coiled coil. Positions 742–751 (SSVPDSSSSD) are enriched in low complexity. The span at 755–773 (EENRSLKTQLEESRRAASR) shows a compositional bias: basic and acidic residues. Residues 1122–1161 (QQSRRSTLGSTLSSDEEDNYSDTKSITSILTDSPLQTTSC) form a tail region. Residues 1124–1134 (SRRSTLGSTLS) are compositionally biased toward low complexity. Over residues 1143-1161 (DTKSITSILTDSPLQTTSC) the composition is skewed to polar residues.

Belongs to the cingulin family. Homodimer.

The protein localises to the cell junction. It localises to the tight junction. Its function is as follows. Probably plays a role in the formation and regulation of the tight junction (TJ) paracellular permeability barrier. Note=Localizes to the apical junction complex composed of tight and adherens junctions. In Danio rerio (Zebrafish), this protein is Cingulin.